The sequence spans 39 residues: uncharacterized protein (39 aa).

This is an uncharacterized protein from Treponema pallidum (strain Nichols).